The following is a 173-amino-acid chain: Ribosome maturation factor RimM (173 aa).

Residues 98 to 170 (EDEYYWCDLL…RMTVSLPEGL (73 aa)) form the PRC barrel domain.

Belongs to the RimM family. As to quaternary structure, binds ribosomal protein uS19.

The protein resides in the cytoplasm. Functionally, an accessory protein needed during the final step in the assembly of 30S ribosomal subunit, possibly for assembly of the head region. Essential for efficient processing of 16S rRNA. May be needed both before and after RbfA during the maturation of 16S rRNA. It has affinity for free ribosomal 30S subunits but not for 70S ribosomes. The chain is Ribosome maturation factor RimM from Geotalea uraniireducens (strain Rf4) (Geobacter uraniireducens).